A 280-amino-acid polypeptide reads, in one-letter code: Putative pyruvate, phosphate dikinase regulatory protein (280 aa).

154-161 (GVSRTSKT) is a binding site for ADP.

This sequence belongs to the pyruvate, phosphate/water dikinase regulatory protein family. PDRP subfamily.

It catalyses the reaction N(tele)-phospho-L-histidyl/L-threonyl-[pyruvate, phosphate dikinase] + ADP = N(tele)-phospho-L-histidyl/O-phospho-L-threonyl-[pyruvate, phosphate dikinase] + AMP + H(+). The enzyme catalyses N(tele)-phospho-L-histidyl/O-phospho-L-threonyl-[pyruvate, phosphate dikinase] + phosphate + H(+) = N(tele)-phospho-L-histidyl/L-threonyl-[pyruvate, phosphate dikinase] + diphosphate. Its function is as follows. Bifunctional serine/threonine kinase and phosphorylase involved in the regulation of the pyruvate, phosphate dikinase (PPDK) by catalyzing its phosphorylation/dephosphorylation. This chain is Putative pyruvate, phosphate dikinase regulatory protein, found in Nitrobacter winogradskyi (strain ATCC 25391 / DSM 10237 / CIP 104748 / NCIMB 11846 / Nb-255).